The chain runs to 457 residues: MITREFDTIAAISTPLGEGAIGIVRLSGTDSFAIAQKIFKGKDLSKVASHTLNYGHIVDPQNQEVLDEVMIGAMRSPKTFTREDIIEINTHGGIAVTNEILQLAIREGARMAEPGEFTKRAFLNGRVDLTQAEAVMDIIRAKTDKAMNNAVKQLDGSLSNLINNTRQEILNTLAQVEVNIDYPEYDDVEEMTTQLMREKTAEFEELLTSLLNTARRGKILREGISTAIIGRPNVGKSSLLNNLLREDKAIVTDIAGTTRDVIEEYVNIKGVPLKLIDTAGIRETDDLVEQIGVERSKKALQEADLVLLVLNASEPLTDQDKQLLEISQDSNRIVLLNKTDLEEKIELDQLPTDIIKISVLHNQNIDKIEERINQLFFENAGIVEQDATYLSNARHISLIEKALESLQAVNQGLEMGMPVDLLQVDMTRTWEILGEITGDAAPDELITQLFSQFCLGK.

Positions 25, 87, and 126 each coordinate (6S)-5-formyl-5,6,7,8-tetrahydrofolate. In terms of domain architecture, TrmE-type G spans 223 to 377 (GISTAIIGRP…IEERINQLFF (155 aa)). N233 is a binding site for K(+). GTP contacts are provided by residues 233–238 (NVGKSS), 252–258 (TDIAGTT), and 277–280 (DTAG). A Mg(2+)-binding site is contributed by S237. K(+) is bound by residues T252, I254, and T257. Residue T258 coordinates Mg(2+). K457 is a binding site for (6S)-5-formyl-5,6,7,8-tetrahydrofolate.

It belongs to the TRAFAC class TrmE-Era-EngA-EngB-Septin-like GTPase superfamily. TrmE GTPase family. Homodimer. Heterotetramer of two MnmE and two MnmG subunits. The cofactor is K(+).

Its subcellular location is the cytoplasm. Functionally, exhibits a very high intrinsic GTPase hydrolysis rate. Involved in the addition of a carboxymethylaminomethyl (cmnm) group at the wobble position (U34) of certain tRNAs, forming tRNA-cmnm(5)s(2)U34. The polypeptide is tRNA modification GTPase MnmE (Streptococcus gordonii (strain Challis / ATCC 35105 / BCRC 15272 / CH1 / DL1 / V288)).